The following is a 615-amino-acid chain: Deoxyribodipyrimidine photo-lyase (615 aa).

The segment at 1 to 53 (MAPSKRKASAPPQTSHVNGNPSADKKRKTTTDAPPTNPNTSSDPLRAPHPFYK) is disordered. Residues 11-21 (PPQTSHVNGNP) show a composition bias toward polar residues. Over residues 31 to 40 (TDAPPTNPNT) the composition is skewed to low complexity. The Photolyase/cryptochrome alpha/beta domain occupies 108-249 (QAVVHWFKMD…AADVVHDTCV (142 aa)). Tyrosine 352 contributes to the FAD binding site. DNA is bound at residue arginine 356. Residue 364–368 (TSNLS) coordinates FAD. Interaction with DNA regions lie at residues 407–414 (EVAWRDFY) and 474–475 (NR). 505–507 (DGD) provides a ligand contact to FAD. Residue glutamine 537 coordinates DNA.

It belongs to the DNA photolyase class-1 family. As to quaternary structure, monomer. The cofactor is FAD. It depends on (6R)-5,10-methylene-5,6,7,8-tetrahydrofolate as a cofactor.

It catalyses the reaction cyclobutadipyrimidine (in DNA) = 2 pyrimidine residues (in DNA).. Its function is as follows. Involved in repair of UV radiation-induced DNA damage. Catalyzes the light-dependent monomerization (300-600 nm) of cyclobutyl pyrimidine dimers (in cis-syn configuration), which are formed between adjacent bases on the same DNA strand upon exposure to ultraviolet radiation. The protein is Deoxyribodipyrimidine photo-lyase (phr) of Neurospora crassa (strain ATCC 24698 / 74-OR23-1A / CBS 708.71 / DSM 1257 / FGSC 987).